Consider the following 419-residue polypeptide: Circumsporozoite protein (419 aa).

The first 23 residues, Met1–Gly23, serve as a signal peptide directing secretion. A disordered region spans residues Ala50–Asn111. A compositionally biased stretch (basic and acidic residues) spans Asn65–Gln95. Positions Lys81–Arg89 are required for the binding to heparan sulfate proteoglycans (HSPGs) on the surface of host hepatocytes. Residues Lys92–Pro96 form a region I; contains the proteolytic cleavage site region. 38 tandem repeats follow at residues Asn99–Gly102, Asn103–Gly106, Asn107–Gly110, Asn111–Gly114, Asn115–Gly118, Asn119–Gly122, Asn123–Gly126, Asn127–Gly130, Asn131–Gly134, Asn135–Gly138, Asn139–Gly142, Asn143–Gly146, Asn147–Gly150, Asn151–Gly154, Asn155–Gly158, Asn159–Gly162, Asn163–Gly166, Asn167–Gly170, Asn171–Gly174, Asn175–Gly178, Asn179–Gly182, Asn183–Gly186, Asn187–Gly190, Asn191–Gly194, Asn195–Gly198, Asn199–Gly202, Asn203–Gly206, Asn207–Gly210, Asn211–Gly214, Asn215–Gly218, Asn219–Gly222, Asn223–Gly226, Asn227–Gly230, Asn231–Gly234, Asn235–Gly238, Asn239–Gly242, Asn243–Gly246, and Asn247–Gly250. The interval Asn99–Asn314 is 54 X 4 AA approximate tandem repeats of N-A-G-G. The segment at Gly146 to Gly237 is disordered. One copy of the 39; approximate repeat lies at Thr251–Gly254. 13 consecutive repeat copies span residues Asn255 to Gly258, Asn259 to Gly262, Asn263 to Gly266, Asn267 to Gly270, Asn271 to Gly274, Asn275 to Gly278, Asn279 to Gly282, Asn283 to Gly286, Asn287 to Gly290, Asn291 to Gly294, Asn295 to Gly298, Asn299 to Gly302, and Asn303 to Gly306. The stretch at Asn307–Ala310 is one 53; approximate repeat. The 54; approximate repeat unit spans residues Asn311–Asn314. The segment at Ala312–Asn332 is disordered. The TSP type-1 domain occupies Lys345–Ala397. 2 disulfides stabilise this stretch: Cys357-Cys391 and Cys361-Cys396. The O-linked (Fuc) threonine glycan is linked to Thr360. The GPI-anchor amidated cysteine moiety is linked to residue Cys396. Positions Ala397–Asn419 are cleaved as a propeptide — removed in mature form.

Belongs to the plasmodium circumsporozoite protein family. In terms of processing, during host cell invasion, proteolytically cleaved at the cell membrane in the region I by a papain-like cysteine protease of parasite origin. Cleavage is triggered by the sporozoite contact with highly sulfated heparan sulfate proteoglycans (HSPGs) present on the host hepatocyte cell surface. Cleavage exposes the TSP type-1 (TSR) domain and is required for productive invasion of host hepatocytes but not for adhesion to the host cell membrane. Cleavage is dispensable for sporozoite development in the oocyst, motility and for traversal of host and vector cells. Post-translationally, O-glycosylated; maybe by POFUT2.

It localises to the cell membrane. It is found in the cytoplasm. Functionally, essential sporozoite protein. In the mosquito vector, required for sporozoite development in the oocyst, migration through the vector hemolymph and entry into the vector salivary glands. In the vertebrate host, required for sporozoite migration through the host dermis and infection of host hepatocytes. Binds to highly sulfated heparan sulfate proteoglycans (HSPGs) on the surface of host hepatocytes. In terms of biological role, in the vertebrate host, binds to highly sulfated heparan sulfate proteoglycans (HSPGs) on the surface of host hepatocytes and is required for sporozoite invasion of the host hepatocytes. This Plasmodium cynomolgi (strain Mulligan/NIH) protein is Circumsporozoite protein.